A 501-amino-acid polypeptide reads, in one-letter code: Aspartyl/glutamyl-tRNA(Asn/Gln) amidotransferase subunit B (501 aa).

Residues 276 to 299 (HYQEADGSTSKGRPKETAEDYRYF) form a disordered region. Positions 288-299 (RPKETAEDYRYF) are enriched in basic and acidic residues.

This sequence belongs to the GatB/GatE family. GatB subfamily. As to quaternary structure, heterotrimer of A, B and C subunits.

It catalyses the reaction L-glutamyl-tRNA(Gln) + L-glutamine + ATP + H2O = L-glutaminyl-tRNA(Gln) + L-glutamate + ADP + phosphate + H(+). It carries out the reaction L-aspartyl-tRNA(Asn) + L-glutamine + ATP + H2O = L-asparaginyl-tRNA(Asn) + L-glutamate + ADP + phosphate + 2 H(+). Allows the formation of correctly charged Asn-tRNA(Asn) or Gln-tRNA(Gln) through the transamidation of misacylated Asp-tRNA(Asn) or Glu-tRNA(Gln) in organisms which lack either or both of asparaginyl-tRNA or glutaminyl-tRNA synthetases. The reaction takes place in the presence of glutamine and ATP through an activated phospho-Asp-tRNA(Asn) or phospho-Glu-tRNA(Gln). This is Aspartyl/glutamyl-tRNA(Asn/Gln) amidotransferase subunit B from Corynebacterium glutamicum (strain R).